The primary structure comprises 387 residues: Small ribosomal subunit protein uS5m (387 aa).

A mitochondrion-targeting transit peptide spans 1–22 (MLRSFSHFLQIGSRRQPTYFRC). Positions 33 to 87 (FKNDPKKELNSNLNEKSVEESSKNETKEQFNSSSIPRESESEGKTASNTSPLSPK) are disordered. Residues 48–60 (KSVEESSKNETKE) are compositionally biased toward basic and acidic residues. Ser85 is modified (phosphoserine). An S5 DRBM domain is found at 225–288 (LMFVPLVRRR…GRAVKNMVYI (64 aa)).

The protein belongs to the universal ribosomal protein uS5 family. As to quaternary structure, component of the mitochondrial small ribosomal subunit (mt-SSU). Mature yeast 74S mitochondrial ribosomes consist of a small (37S) and a large (54S) subunit. The 37S small subunit contains a 15S ribosomal RNA (15S mt-rRNA) and at least 32 different proteins. The 54S large subunit contains a 21S rRNA (21S mt-rRNA) and at least 45 different proteins. uS3m, uS4m and uS5m form the narrow entry site of the mRNA channel.

It localises to the mitochondrion. In terms of biological role, component of the mitochondrial ribosome (mitoribosome), a dedicated translation machinery responsible for the synthesis of mitochondrial genome-encoded proteins, including at least some of the essential transmembrane subunits of the mitochondrial respiratory chain. The mitoribosomes are attached to the mitochondrial inner membrane and translation products are cotranslationally integrated into the membrane. This chain is Small ribosomal subunit protein uS5m (mrp5), found in Schizosaccharomyces pombe (strain 972 / ATCC 24843) (Fission yeast).